The sequence spans 523 residues: 2-isopropylmalate synthase (523 aa).

The region spanning 5-267 (VIIFDTTLRD…ETGINAKEIH (263 aa)) is the Pyruvate carboxyltransferase domain. Mn(2+) contacts are provided by Asp14, His202, His204, and Asn238. Positions 392–523 (QLKQLVVHSD…QQKARSLGGV (132 aa)) are regulatory domain.

It belongs to the alpha-IPM synthase/homocitrate synthase family. LeuA type 1 subfamily. Homodimer. It depends on Mn(2+) as a cofactor.

Its subcellular location is the cytoplasm. The enzyme catalyses 3-methyl-2-oxobutanoate + acetyl-CoA + H2O = (2S)-2-isopropylmalate + CoA + H(+). Its pathway is amino-acid biosynthesis; L-leucine biosynthesis; L-leucine from 3-methyl-2-oxobutanoate: step 1/4. Catalyzes the condensation of the acetyl group of acetyl-CoA with 3-methyl-2-oxobutanoate (2-ketoisovalerate) to form 3-carboxy-3-hydroxy-4-methylpentanoate (2-isopropylmalate). The protein is 2-isopropylmalate synthase of Shewanella woodyi (strain ATCC 51908 / MS32).